The chain runs to 442 residues: Probable diguanylate cyclase DgcI (442 aa).

The first 23 residues, 1–23, serve as a signal peptide directing secretion; sequence MSRINKFVLTVSLLIFIMISAVA. C24 is lipidated: N-palmitoyl cysteine. C24 carries S-diacylglycerol cysteine lipidation. Residues 231 to 251 traverse the membrane as a helical segment; sequence LIIFFAALVAVISGASCLYLV. In terms of domain architecture, GGDEF spans 319–442; the sequence is KGGYLCLFDV…KNGRAQISWQ (124 aa). D327 is a binding site for Mg(2+). Positions 335, 340, and 344 each coordinate substrate. D371 serves as a coordination point for Mg(2+).

Homodimer. Mg(2+) serves as cofactor.

It localises to the cell membrane. It catalyses the reaction 2 GTP = 3',3'-c-di-GMP + 2 diphosphate. The protein operates within purine metabolism; 3',5'-cyclic di-GMP biosynthesis. Its function is as follows. Catalyzes the synthesis of cyclic-di-GMP (c-di-GMP) via the condensation of 2 GTP molecules. This Escherichia coli (strain K12) protein is Probable diguanylate cyclase DgcI.